We begin with the raw amino-acid sequence, 134 residues long: Probable salivary secreted peptide (134 aa).

Positions 1–24 are cleaved as a signal peptide; the sequence is MGAQKTIAYLAIIAIAVIFAQVNT.

The protein resides in the secreted. In Bombus ignitus (Bumblebee), this protein is Probable salivary secreted peptide.